Consider the following 521-residue polypeptide: MNTLSSARSVAIYVGPVRSSRSASVLAHEQAKSSITEEHKTYDEIPRPNKFKFMRAFMPGGEFQNASITEYTSAMRKRYGDIYVMPGMFGRKDWVTTFNTKDIEMVFRNEGIWPRRDGLDSIVYFREHVRPDVYGEVQGLVASQNEAWGKLRSAINPIFMQPRGLRMYYEPLSNINNEFIERIKEIRDPKTLEVPEDFTDEISRLVFESLGLVAFDRQMGLIRKNRDNSDALTLFQTSRDIFRLTFKLDIQPSMWKIISTPTYRKMKRTLNDSLNVSQKMLKENQDALEKRRQAGEKINSNSMLERLMEIDPKVAVIMSLDILFAGVDATATLLSAVLLCLSKHPDKQAKLREELLSIMPTKDSLLNEENMKDMPYLRAVIKETLRYYPNGFGTMRTCQNDVILSGYRVPKGTTVLLGSNVLMKEATYYPRPDEFLPERWLRDPETGKKMQVSPFTFLPFGFGPRMCIGKRVVDLEMETTVAKLIRNFHVEFNRDASRPFKTMFLMEPAITFPFKFTDIEQ.

Residues 1–19 (MNTLSSARSVAIYVGPVRS) constitute a mitochondrion transit peptide. Cys467 contacts heme.

The protein belongs to the cytochrome P450 family. Requires heme as cofactor.

It is found in the mitochondrion membrane. This chain is Probable cytochrome P450 12d1 distal, mitochondrial, found in Drosophila melanogaster (Fruit fly).